Consider the following 297-residue polypeptide: Protoheme IX farnesyltransferase (297 aa).

Helical transmembrane passes span 23–43, 49–69, 93–113, 117–137, 144–164, 171–191, 215–235, 238–258, and 275–295; these read VTQL…PGMP, VFGT…NCLI, IQVL…LYHL, LTMW…TVIL, NIVI…AAVA, AWVL…ALAL, RLHI…PYAI, SGAL…WYAW, and FSIL…WVGL.

The protein belongs to the UbiA prenyltransferase family. Protoheme IX farnesyltransferase subfamily.

Its subcellular location is the cell inner membrane. The catalysed reaction is heme b + (2E,6E)-farnesyl diphosphate + H2O = Fe(II)-heme o + diphosphate. It functions in the pathway porphyrin-containing compound metabolism; heme O biosynthesis; heme O from protoheme: step 1/1. Its function is as follows. Converts heme B (protoheme IX) to heme O by substitution of the vinyl group on carbon 2 of heme B porphyrin ring with a hydroxyethyl farnesyl side group. This is Protoheme IX farnesyltransferase from Bordetella pertussis (strain Tohama I / ATCC BAA-589 / NCTC 13251).